Consider the following 386-residue polypeptide: Ethanolamine kinase 2 (386 aa).

This sequence belongs to the choline/ethanolamine kinase family. As to expression, expressed in kidney, liver, ovary, testis and prostate.

It carries out the reaction ethanolamine + ATP = phosphoethanolamine + ADP + H(+). Its pathway is phospholipid metabolism; phosphatidylethanolamine biosynthesis; phosphatidylethanolamine from ethanolamine: step 1/3. Functionally, highly specific for ethanolamine phosphorylation. Does not have choline kinase activity. The chain is Ethanolamine kinase 2 (ETNK2) from Homo sapiens (Human).